Reading from the N-terminus, the 552-residue chain is Putative transport protein ECA4401 (552 aa).

5 helical membrane-spanning segments follow: residues 4–24, 26–46, 65–85, 90–112, and 158–178; these read IALT…IGNW, IYGV…VGHV, FGLI…FFSS, GLRL…VMLH, and TGYA…MWLM. RCK C-terminal domains follow at residues 191 to 276 and 279 to 361; these read KQFE…VIGN and ETSL…IVGN. A run of 6 helical transmembrane segments spans residues 371-391, 393-413, 439-459, 464-484, 493-513, and 530-550; these read MLPV…PLMV, GFPV…ALVL, IVLF…DTLL, VWWI…VGIL, YLTL…LAFA, and VYPL…VLFL.

This sequence belongs to the AAE transporter (TC 2.A.81) family. YidE subfamily.

The protein resides in the cell membrane. This is Putative transport protein ECA4401 from Pectobacterium atrosepticum (strain SCRI 1043 / ATCC BAA-672) (Erwinia carotovora subsp. atroseptica).